The chain runs to 261 residues: MTHQTHAYHMVNPSPWPLTGALSALLMTSGLIMWFHFNSVALLMLGLTTNMLTMYQWWRDVIRESTFQGHHTPNVQKGLRYGMILFIISEVLFFTGFFWAFYHSSLAPTPELGGCWPPTGIHPLNPLEVPLLNTSVLLASGVSITWAHHSLMEGNRNHMLQALFITIALGVYFTLLQASEYYEAPFTISDGVYGSTFFVATGFHGLHVIIGSTFLIVCFFRQLKFHFTSSHHFGFEAAAWYWHFVDVVWLFLYVSIYWWGS.

The Mitochondrial matrix segment spans residues 1–15 (MTHQTHAYHMVNPSP). The helical transmembrane segment at 16-34 (WPLTGALSALLMTSGLIMW) threads the bilayer. The Mitochondrial intermembrane segment spans residues 35-40 (FHFNSV). Residues 41–66 (ALLMLGLTTNMLTMYQWWRDVIREST) traverse the membrane as a helical segment. The Mitochondrial matrix segment spans residues 67 to 72 (FQGHHT). A helical transmembrane segment spans residues 73 to 105 (PNVQKGLRYGMILFIISEVLFFTGFFWAFYHSS). At 106 to 128 (LAPTPELGGCWPPTGIHPLNPLE) the chain is on the mitochondrial intermembrane side. The chain crosses the membrane as a helical span at residues 129-152 (VPLLNTSVLLASGVSITWAHHSLM). Topologically, residues 153–155 (EGN) are mitochondrial matrix. A helical transmembrane segment spans residues 156-183 (RNHMLQALFITIALGVYFTLLQASEYYE). The Mitochondrial intermembrane portion of the chain corresponds to 184 to 190 (APFTISD). The chain crosses the membrane as a helical span at residues 191-223 (GVYGSTFFVATGFHGLHVIIGSTFLIVCFFRQL). Residues 224-232 (KFHFTSSHH) lie on the Mitochondrial matrix side of the membrane. A helical membrane pass occupies residues 233-256 (FGFEAAAWYWHFVDVVWLFLYVSI). The Mitochondrial intermembrane portion of the chain corresponds to 257 to 261 (YWWGS).

Belongs to the cytochrome c oxidase subunit 3 family. Component of the cytochrome c oxidase (complex IV, CIV), a multisubunit enzyme composed of 14 subunits. The complex is composed of a catalytic core of 3 subunits MT-CO1, MT-CO2 and MT-CO3, encoded in the mitochondrial DNA, and 11 supernumerary subunits COX4I, COX5A, COX5B, COX6A, COX6B, COX6C, COX7A, COX7B, COX7C, COX8 and NDUFA4, which are encoded in the nuclear genome. The complex exists as a monomer or a dimer and forms supercomplexes (SCs) in the inner mitochondrial membrane with NADH-ubiquinone oxidoreductase (complex I, CI) and ubiquinol-cytochrome c oxidoreductase (cytochrome b-c1 complex, complex III, CIII), resulting in different assemblies (supercomplex SCI(1)III(2)IV(1) and megacomplex MCI(2)III(2)IV(2)).

It localises to the mitochondrion inner membrane. It carries out the reaction 4 Fe(II)-[cytochrome c] + O2 + 8 H(+)(in) = 4 Fe(III)-[cytochrome c] + 2 H2O + 4 H(+)(out). In terms of biological role, component of the cytochrome c oxidase, the last enzyme in the mitochondrial electron transport chain which drives oxidative phosphorylation. The respiratory chain contains 3 multisubunit complexes succinate dehydrogenase (complex II, CII), ubiquinol-cytochrome c oxidoreductase (cytochrome b-c1 complex, complex III, CIII) and cytochrome c oxidase (complex IV, CIV), that cooperate to transfer electrons derived from NADH and succinate to molecular oxygen, creating an electrochemical gradient over the inner membrane that drives transmembrane transport and the ATP synthase. Cytochrome c oxidase is the component of the respiratory chain that catalyzes the reduction of oxygen to water. Electrons originating from reduced cytochrome c in the intermembrane space (IMS) are transferred via the dinuclear copper A center (CU(A)) of subunit 2 and heme A of subunit 1 to the active site in subunit 1, a binuclear center (BNC) formed by heme A3 and copper B (CU(B)). The BNC reduces molecular oxygen to 2 water molecules using 4 electrons from cytochrome c in the IMS and 4 protons from the mitochondrial matrix. In Nanger granti (Grant's gazelle), this protein is Cytochrome c oxidase subunit 3 (MT-CO3).